The chain runs to 606 residues: NADH-ubiquinone oxidoreductase chain 5 (606 aa).

Transmembrane regions (helical) follow at residues 4-24 (FSSLMLASLSVLTLPIMSSIL), 38-58 (NIISYAFITSLIPTMMFIHSG), 87-107 (MIFVPVALFVTWSIMEFSLWY), 117-137 (FFKYLLTFLITMMILVTANNL), 140-160 (LFIGWEGVGIMSFLLIGWWYG), 171-191 (AILYNRIGDIGFIMAMAWFLF), 211-233 (LPLLGLLLAATGKSAQFGLHPWL), 241-261 (TPVSALLHSSTMVVAGVFLLI), 273-293 (IQSLTLCLGAITTLFTAICAL), 301-320 (IIAFSTSSQLGLMIVTIGIN), 325-347 (AFLHICTHAFFKAMLFMCSGSII), 366-386 (MPFTTTSLIIGSLALTGMPFL), 413-433 (LIATSLTAVYSTRIIFFALLG), 457-477 (LLIGSIFAGFFISNNIYPTTI), 488-508 (LTALTVTILGFTLALELSLIT), and 584-604 (IKLYFLSFLITLTLSMLLFNL).

The protein belongs to the complex I subunit 5 family. Core subunit of respiratory chain NADH dehydrogenase (Complex I) which is composed of 45 different subunits.

It is found in the mitochondrion inner membrane. The enzyme catalyses a ubiquinone + NADH + 5 H(+)(in) = a ubiquinol + NAD(+) + 4 H(+)(out). In terms of biological role, core subunit of the mitochondrial membrane respiratory chain NADH dehydrogenase (Complex I) which catalyzes electron transfer from NADH through the respiratory chain, using ubiquinone as an electron acceptor. Essential for the catalytic activity and assembly of complex I. The sequence is that of NADH-ubiquinone oxidoreductase chain 5 (MT-ND5) from Equus asinus (Donkey).